The following is a 210-amino-acid chain: Redox-sensing transcriptional repressor Rex (210 aa).

The H-T-H motif DNA-binding region spans 16-55; sequence IYSRYLRQLIEEGVETVSSGEIAAGVGVSSAQVRKDLAYF. 90 to 95 contacts NAD(+); the sequence is GAGKLG.

This sequence belongs to the transcriptional regulatory Rex family. As to quaternary structure, homodimer.

It localises to the cytoplasm. Functionally, modulates transcription in response to changes in cellular NADH/NAD(+) redox state. The polypeptide is Redox-sensing transcriptional repressor Rex (Syntrophomonas wolfei subsp. wolfei (strain DSM 2245B / Goettingen)).